Here is a 394-residue protein sequence, read N- to C-terminus: 3-phenylpropionate/cinnamic acid dioxygenase ferredoxin--NAD(+) reductase component (394 aa).

FAD is bound at residue 5–36 (TFIIVGAGQAGAMAAATLRQQQFDGDIILIGK). An NAD(+)-binding site is contributed by 146 to 174 (RILIVGGGVIGLELAATSCELGANVTVIE).

The protein belongs to the bacterial ring-hydroxylating dioxygenase ferredoxin reductase family. This dioxygenase system consists of four proteins: the two subunits of the hydroxylase component (HcaE and HcaF), a ferredoxin (HcaC) and a ferredoxin reductase (HcaD). It depends on FAD as a cofactor.

The catalysed reaction is 2 reduced [2Fe-2S]-[ferredoxin] + NAD(+) + H(+) = 2 oxidized [2Fe-2S]-[ferredoxin] + NADH. The protein operates within aromatic compound metabolism; 3-phenylpropanoate degradation. Part of the multicomponent 3-phenylpropionate dioxygenase, that converts 3-phenylpropionic acid (PP) and cinnamic acid (CI) into 3-phenylpropionate-dihydrodiol (PP-dihydrodiol) and cinnamic acid-dihydrodiol (CI-dihydrodiol), respectively. This chain is 3-phenylpropionate/cinnamic acid dioxygenase ferredoxin--NAD(+) reductase component, found in Photorhabdus laumondii subsp. laumondii (strain DSM 15139 / CIP 105565 / TT01) (Photorhabdus luminescens subsp. laumondii).